The sequence spans 92 residues: Small ribosomal subunit protein uS19 (92 aa).

Belongs to the universal ribosomal protein uS19 family.

In terms of biological role, protein S19 forms a complex with S13 that binds strongly to the 16S ribosomal RNA. The sequence is that of Small ribosomal subunit protein uS19 from Bacillus pumilus (strain SAFR-032).